Here is a 991-residue protein sequence, read N- to C-terminus: Translation initiation factor IF-2 (991 aa).

Disordered stretches follow at residues 58–82 (EGKK…GRSR) and 106–405 (QARA…PAPQ). Residues 106-164 (QARADAAASDAAPAEPAPAAAEPSASAPVTAPVNAPAADAPQAPATAAPDTAAPAAETP) are compositionally biased toward low complexity. Over residues 165–175 (SQPPAVEPQPA) the composition is skewed to pro residues. 3 stretches are compositionally biased toward low complexity: residues 190–206 (AKPA…AAVE), 221–258 (AVQA…ASKP), and 267–276 (APVPVAAPAV). Positions 279–289 (AGREEARRAAE) are enriched in basic and acidic residues. The span at 379 to 388 (RAGGKGGKGG) shows a compositional bias: gly residues. The span at 395–405 (QAERRHEPAPQ) shows a compositional bias: basic and acidic residues. Residues 492-659 (PRAPVVTVMG…NVLLQAEILE (168 aa)) enclose the tr-type G domain. Residues 501-508 (GHVDHGKT) are G1. Position 501 to 508 (501 to 508 (GHVDHGKT)) interacts with GTP. The segment at 526 to 530 (GITQH) is G2. A G3 region spans residues 547–550 (DTPG). GTP is bound by residues 547–551 (DTPGH) and 601–604 (NKID). The interval 601–604 (NKID) is G4. Positions 637–639 (SAK) are G5.

This sequence belongs to the TRAFAC class translation factor GTPase superfamily. Classic translation factor GTPase family. IF-2 subfamily.

Its subcellular location is the cytoplasm. In terms of biological role, one of the essential components for the initiation of protein synthesis. Protects formylmethionyl-tRNA from spontaneous hydrolysis and promotes its binding to the 30S ribosomal subunits. Also involved in the hydrolysis of GTP during the formation of the 70S ribosomal complex. The protein is Translation initiation factor IF-2 of Bordetella petrii (strain ATCC BAA-461 / DSM 12804 / CCUG 43448).